We begin with the raw amino-acid sequence, 66 residues long: Large ribosomal subunit protein bL35 (66 aa).

The span at 1 to 16 (MPKQKTHRASAKRFKR) shows a compositional bias: basic residues. The disordered stretch occupies residues 1 to 21 (MPKQKTHRASAKRFKRTGSGG).

Belongs to the bacterial ribosomal protein bL35 family.

This chain is Large ribosomal subunit protein bL35, found in Streptococcus mutans serotype c (strain ATCC 700610 / UA159).